Reading from the N-terminus, the 108-residue chain is MSMIRIAPEVHLVMDPDTAVVAEEREDSILYSMDPVFERMDKLDGIAEDLLNSLSPSKPLLNSWPGRENTSYMAGIYGNAFYGIVVGLAFSGLLALIIFIQRLIEGGM.

Residues 80 to 100 (AFYGIVVGLAFSGLLALIIFI) traverse the membrane as a helical segment.

The protein belongs to the MtrB family. The complex is composed of 8 subunits; MtrA, MtrB, MtrC, MtrD, MtrE, MtrF, MtrG and MtrH.

It localises to the cell membrane. The catalysed reaction is 5-methyl-5,6,7,8-tetrahydromethanopterin + coenzyme M + 2 Na(+)(in) = 5,6,7,8-tetrahydromethanopterin + methyl-coenzyme M + 2 Na(+)(out). The protein operates within one-carbon metabolism; methanogenesis from CO(2); methyl-coenzyme M from 5,10-methylene-5,6,7,8-tetrahydromethanopterin: step 2/2. Its function is as follows. Part of a complex that catalyzes the formation of methyl-coenzyme M and tetrahydromethanopterin from coenzyme M and methyl-tetrahydromethanopterin. This is an energy-conserving, sodium-ion translocating step. In Methanosarcina acetivorans (strain ATCC 35395 / DSM 2834 / JCM 12185 / C2A), this protein is Tetrahydromethanopterin S-methyltransferase subunit B.